The sequence spans 323 residues: Acetyl esterase (323 aa).

An Involved in the stabilization of the negatively charged intermediate by the formation of the oxyanion hole motif is present at residues H91 to G93. Residues S165, D262, and H292 contribute to the active site.

It belongs to the 'GDXG' lipolytic enzyme family. In terms of assembly, homodimer. Interacts with MalT and MelA.

It is found in the cytoplasm. Displays esterase activity towards short chain fatty esters (acyl chain length of up to 8 carbons). Able to hydrolyze triacetylglycerol (triacetin) and tributyrylglycerol (tributyrin), but not trioleylglycerol (triolein) or cholesterol oleate. Negatively regulates MalT activity by antagonizing maltotriose binding. Inhibits MelA galactosidase activity. This Salmonella paratyphi A (strain AKU_12601) protein is Acetyl esterase.